We begin with the raw amino-acid sequence, 284 residues long: Polyamine aminopropyltransferase (284 aa).

One can recognise a PABS domain in the interval 6 to 242 (KGWFTEVCKE…GWWSATLAGH (237 aa)). Q36 is an S-methyl-5'-thioadenosine binding site. Spermidine is bound by residues H67 and D91. Residues E111 and 142-143 (DG) contribute to the S-methyl-5'-thioadenosine site. D161 acts as the Proton acceptor in catalysis. 161–164 (DSTD) lines the spermidine pocket.

Belongs to the spermidine/spermine synthase family. As to quaternary structure, homodimer or homotetramer.

Its subcellular location is the cytoplasm. It carries out the reaction S-adenosyl 3-(methylsulfanyl)propylamine + putrescine = S-methyl-5'-thioadenosine + spermidine + H(+). The protein operates within amine and polyamine biosynthesis; spermidine biosynthesis; spermidine from putrescine: step 1/1. In terms of biological role, catalyzes the irreversible transfer of a propylamine group from the amino donor S-adenosylmethioninamine (decarboxy-AdoMet) to putrescine (1,4-diaminobutane) to yield spermidine. The polypeptide is Polyamine aminopropyltransferase (Nitrosococcus oceani (strain ATCC 19707 / BCRC 17464 / JCM 30415 / NCIMB 11848 / C-107)).